We begin with the raw amino-acid sequence, 334 residues long: 6-phosphogluconolactonase (334 aa).

Belongs to the cycloisomerase 2 family.

The enzyme catalyses 6-phospho-D-glucono-1,5-lactone + H2O = 6-phospho-D-gluconate + H(+). Its pathway is carbohydrate degradation; pentose phosphate pathway; D-ribulose 5-phosphate from D-glucose 6-phosphate (oxidative stage): step 2/3. Its function is as follows. Catalyzes the hydrolysis of 6-phosphogluconolactone to 6-phosphogluconate. The sequence is that of 6-phosphogluconolactonase from Buchnera aphidicola subsp. Acyrthosiphon pisum (strain Tuc7).